A 148-amino-acid chain; its full sequence is uncharacterized protein (148 aa).

The N-terminal stretch at 1–35 is a signal peptide; the sequence is MRCVTRTRNWWRRAARMPRAGSSAWWVAVCKQVCT.

The protein resides in the secreted. This is an uncharacterized protein from Homo sapiens (Human).